Consider the following 109-residue polypeptide: U4-lycotoxin-Ls1a (109 aa).

The N-terminal stretch at 1-22 (MKVLVLFSVLFLTLFSYSSTEA) is a signal peptide. The propeptide occupies 23-44 (IDELDSDAEEDMLSLMANEQVR). A knottin domain region spans residues 45 to 88 (AKACTPRLHDCSHDRHSCCRGELFKDVCYCFYPEGEDKTEVCSC). Intrachain disulfides connect C48–C63, C55–C72, C62–C88, and C74–C86. A linear cationic cytotoxin domain region spans residues 89–108 (QQPKSHKYIEKVVDKAKTVV).

It belongs to the neurotoxin 19 (CSTX) family. 05 (U4-Lctx) subfamily. In terms of tissue distribution, expressed by the venom gland.

It localises to the secreted. Its function is as follows. Enhances the high-affinity desensitization of human P2RX3 purinoceptors. The protein is U4-lycotoxin-Ls1a of Lycosa singoriensis (Wolf spider).